We begin with the raw amino-acid sequence, 326 residues long: Membrane-associated kinase regulator 5 (326 aa).

Disordered stretches follow at residues threonine 188–proline 239 and glycine 267–aspartate 326. 2 stretches are compositionally biased toward low complexity: residues lysine 190–serine 202 and glutamate 270–serine 305.

In terms of tissue distribution, expressed in roots.

Its subcellular location is the cell membrane. The protein resides in the cytoplasm. It is found in the cytosol. Its function is as follows. Positive effector of CLE45 peptide signaling. Post-transcriptionally regulated amplifier of the CLE45 peptide signal that acts downstream of BAM3 in the regulation of the transition of root protophloem cells from proliferation to differentiation; thus preventing primary root elongation but stimulating lateral roots development. The chain is Membrane-associated kinase regulator 5 from Arabidopsis thaliana (Mouse-ear cress).